The chain runs to 377 residues: ATP-dependent (S)-NAD(P)H-hydrate dehydratase (377 aa).

Residues L10 to L366 enclose the YjeF C-terminal domain. (6S)-NADPHX-binding positions include G148 and N201–R207. ATP-binding positions include K245–D249 and G264–G273. D274 is a (6S)-NADPHX binding site.

The protein belongs to the NnrD/CARKD family. Mg(2+) is required as a cofactor.

Its subcellular location is the cytoplasm. The enzyme catalyses (6S)-NADHX + ATP = ADP + phosphate + NADH + H(+). It catalyses the reaction (6S)-NADPHX + ATP = ADP + phosphate + NADPH + H(+). Functionally, catalyzes the dehydration of the S-form of NAD(P)HX at the expense of ATP, which is converted to ADP. Together with NAD(P)HX epimerase, which catalyzes the epimerization of the S- and R-forms, the enzyme allows the repair of both epimers of NAD(P)HX, a damaged form of NAD(P)H that is a result of enzymatic or heat-dependent hydration. The protein is ATP-dependent (S)-NAD(P)H-hydrate dehydratase of Candida albicans (strain SC5314 / ATCC MYA-2876) (Yeast).